Consider the following 181-residue polypeptide: Adenine phosphoribosyltransferase (181 aa).

This sequence belongs to the purine/pyrimidine phosphoribosyltransferase family. Homodimer.

It localises to the cytoplasm. The catalysed reaction is AMP + diphosphate = 5-phospho-alpha-D-ribose 1-diphosphate + adenine. The protein operates within purine metabolism; AMP biosynthesis via salvage pathway; AMP from adenine: step 1/1. Catalyzes a salvage reaction resulting in the formation of AMP, that is energically less costly than de novo synthesis. The polypeptide is Adenine phosphoribosyltransferase (Rhodopseudomonas palustris (strain BisB5)).